Reading from the N-terminus, the 436-residue chain is GTPase Obg (436 aa).

Positions 2-160 (SMFLDTAKIQ…RELLLELKVL (159 aa)) constitute an Obg domain. The OBG-type G domain occupies 161-338 (ADVGLVGFPS…LLDATAELLD (178 aa)). GTP-binding positions include 167 to 174 (GFPSVGKS), 192 to 196 (FTTIV), 214 to 217 (DLPG), 284 to 287 (NKMD), and 319 to 321 (SSL). Mg(2+) is bound by residues Ser-174 and Thr-194. An OCT domain is found at 358–436 (GFDEEAPAFE…IGKFEFEFVD (79 aa)).

This sequence belongs to the TRAFAC class OBG-HflX-like GTPase superfamily. OBG GTPase family. In terms of assembly, monomer. Mg(2+) is required as a cofactor.

The protein resides in the cytoplasm. Its function is as follows. An essential GTPase which binds GTP, GDP and possibly (p)ppGpp with moderate affinity, with high nucleotide exchange rates and a fairly low GTP hydrolysis rate. Plays a role in control of the cell cycle, stress response, ribosome biogenesis and in those bacteria that undergo differentiation, in morphogenesis control. This Streptococcus gordonii (strain Challis / ATCC 35105 / BCRC 15272 / CH1 / DL1 / V288) protein is GTPase Obg.